The sequence spans 119 residues: Ig heavy chain V region T601 (119 aa).

Positions 1-112 (EVKLLESGGG…GYFDVWGAGT (112 aa)) constitute an Ig-like domain.

In Mus musculus (Mouse), this protein is Ig heavy chain V region T601.